A 72-amino-acid chain; its full sequence is Large ribosomal subunit protein uL29 (72 aa).

Belongs to the universal ribosomal protein uL29 family.

This is Large ribosomal subunit protein uL29 from Prochlorococcus marinus (strain MIT 9312).